A 492-amino-acid polypeptide reads, in one-letter code: Probable cytosol aminopeptidase (492 aa).

Residues lysine 262 and aspartate 267 each coordinate Mn(2+). Residue lysine 274 is part of the active site. 3 residues coordinate Mn(2+): aspartate 286, aspartate 345, and glutamate 347. Arginine 349 is a catalytic residue.

It belongs to the peptidase M17 family. It depends on Mn(2+) as a cofactor.

It localises to the cytoplasm. It catalyses the reaction Release of an N-terminal amino acid, Xaa-|-Yaa-, in which Xaa is preferably Leu, but may be other amino acids including Pro although not Arg or Lys, and Yaa may be Pro. Amino acid amides and methyl esters are also readily hydrolyzed, but rates on arylamides are exceedingly low.. It carries out the reaction Release of an N-terminal amino acid, preferentially leucine, but not glutamic or aspartic acids.. In terms of biological role, presumably involved in the processing and regular turnover of intracellular proteins. Catalyzes the removal of unsubstituted N-terminal amino acids from various peptides. This Acaryochloris marina (strain MBIC 11017) protein is Probable cytosol aminopeptidase.